Reading from the N-terminus, the 139-residue chain is ATP synthase epsilon chain 2 (139 aa).

It belongs to the ATPase epsilon chain family. In terms of assembly, F-type ATPases have 2 components, CF(1) - the catalytic core - and CF(0) - the membrane proton channel. CF(1) has five subunits: alpha(3), beta(3), gamma(1), delta(1), epsilon(1). CF(0) has three main subunits: a, b and c.

It localises to the cell inner membrane. Functionally, produces ATP from ADP in the presence of a proton gradient across the membrane. This chain is ATP synthase epsilon chain 2 (atpC2), found in Ralstonia nicotianae (strain ATCC BAA-1114 / GMI1000) (Ralstonia solanacearum).